The sequence spans 494 residues: UPF0371 protein SUB1165 (494 aa).

Belongs to the UPF0371 family.

The polypeptide is UPF0371 protein SUB1165 (Streptococcus uberis (strain ATCC BAA-854 / 0140J)).